The primary structure comprises 48 residues: M-oxotoxin-Ot1b (48 aa).

The protein resides in the secreted. Its subcellular location is the target cell membrane. Its function is as follows. Disrupts cell membranes, particularly those rich in phosphocholine, through formation of pores. Has antimicrobial activity, hemolytic activity and insecticidal activity. In Oxyopes takobius (Lynx spider), this protein is M-oxotoxin-Ot1b.